A 126-amino-acid chain; its full sequence is Aspartate 1-decarboxylase (126 aa).

Catalysis depends on Ser25, which acts as the Schiff-base intermediate with substrate; via pyruvic acid. At Ser25 the chain carries Pyruvic acid (Ser). Thr57 is a binding site for substrate. Tyr58 serves as the catalytic Proton donor. Position 73-75 (Gly73–Ala75) interacts with substrate.

This sequence belongs to the PanD family. Heterooctamer of four alpha and four beta subunits. It depends on pyruvate as a cofactor. In terms of processing, is synthesized initially as an inactive proenzyme, which is activated by self-cleavage at a specific serine bond to produce a beta-subunit with a hydroxyl group at its C-terminus and an alpha-subunit with a pyruvoyl group at its N-terminus.

Its subcellular location is the cytoplasm. The enzyme catalyses L-aspartate + H(+) = beta-alanine + CO2. It participates in cofactor biosynthesis; (R)-pantothenate biosynthesis; beta-alanine from L-aspartate: step 1/1. Its function is as follows. Catalyzes the pyruvoyl-dependent decarboxylation of aspartate to produce beta-alanine. This chain is Aspartate 1-decarboxylase, found in Saccharophagus degradans (strain 2-40 / ATCC 43961 / DSM 17024).